A 377-amino-acid chain; its full sequence is Galactoside alpha-(1,2)-fucosyltransferase 1 (377 aa).

Over 1–8 (MWTPSRRQ) the chain is Cytoplasmic. A helical; Signal-anchor for type II membrane protein transmembrane segment spans residues 9–26 (LCLAFLLVCVLSAGSFFF). The Lumenal segment spans residues 27–377 (HLNGGNFFRN…WKPDSLFRLV (351 aa)). 3 N-linked (GlcNAc...) asparagine glycosylation sites follow: Asn-67, Asn-303, and Asn-329.

Belongs to the glycosyltransferase 11 family. In terms of tissue distribution, in the adult, highly expressed in pancreas, testis and epididymis and to a lesser extent in thymus, lung, stomach, small intestine, colon, spleen and uterus. Not expressed in brain, heart, skeletal muscle, kidney, liver and bone marrow. Expressed in epididymis and testis.

Its subcellular location is the golgi apparatus. The protein localises to the golgi stack membrane. It catalyses the reaction a beta-D-galactosyl-(1-&gt;4)-N-acetyl-beta-D-glucosaminyl derivative + GDP-beta-L-fucose = an alpha-L-Fuc-(1-&gt;2)-beta-D-Gal-(1-&gt;4)-beta-D-GlcNAc derivative + GDP + H(+). The enzyme catalyses a ganglioside GA1 + GDP-beta-L-fucose = a ganglioside Fuc-GA1 + GDP + H(+). It carries out the reaction a beta-D-Gal-(1-&gt;3)-beta-D-GlcNAc-(1-&gt;3)-beta-D-Gal-(1-&gt;4)-beta-D-Glc-(1&lt;-&gt;1')-Cer(d18:1(4E)) + GDP-beta-L-fucose = alpha-L-fucosyl-(1-&gt;2)- beta-D-galactosyl-(1-&gt;3)-N-acetyl-beta-D-glucosaminyl-(1-&gt;3)-beta-D-galactosyl-(1-&gt;4)-beta-D-glucosyl-(1&lt;-&gt;1')-N-acylsphing-4-enine + GDP + H(+). The catalysed reaction is a neolactoside nLc4Cer(d18:1(4E)) + GDP-beta-L-fucose = a neolactoside IV(2)-alpha-Fuc-nLc4Cer(d18:1(4E)) + GDP + H(+). It catalyses the reaction a ganglioside GM1 + GDP-beta-L-fucose = a ganglioside Fuc-GM1 + GDP + H(+). The enzyme catalyses beta-D-galactosyl-(1-&gt;3)-N-acetyl-D-galactosamine + GDP-beta-L-fucose = alpha-L-fucosyl-(1-&gt;2)-beta-D-galactosyl-(1-&gt;3)-N-acetyl-D-galactosamine + GDP + H(+). It functions in the pathway protein modification; protein glycosylation. Functionally, catalyzes the transfer of L-fucose, from a guanosine diphosphate-beta-L-fucose, to the terminal galactose residue of glycoconjugates through an alpha(1,2) linkage leading to H antigen synthesis that is an intermediate substrate in the synthesis of ABO blood group antigens. H antigen is essential for maturation of the glomerular layer of the main olfactory bulb, in cell migration and early cell-cell contacts during tumor associated angiogenesis. Preferentially fucosylates soluble lactose and to a lesser extent, fucosylates glycolipids gangliosides GA1 and GM1a. This chain is Galactoside alpha-(1,2)-fucosyltransferase 1, found in Mus musculus (Mouse).